Consider the following 89-residue polypeptide: Small ribosomal subunit protein uS15 (89 aa).

It belongs to the universal ribosomal protein uS15 family. Part of the 30S ribosomal subunit. Forms a bridge to the 50S subunit in the 70S ribosome, contacting the 23S rRNA.

Functionally, one of the primary rRNA binding proteins, it binds directly to 16S rRNA where it helps nucleate assembly of the platform of the 30S subunit by binding and bridging several RNA helices of the 16S rRNA. In terms of biological role, forms an intersubunit bridge (bridge B4) with the 23S rRNA of the 50S subunit in the ribosome. This chain is Small ribosomal subunit protein uS15, found in Ureaplasma parvum serovar 3 (strain ATCC 27815 / 27 / NCTC 11736).